The sequence spans 382 residues: D-alanine--D-alanine ligase (382 aa).

In terms of domain architecture, ATP-grasp spans 139 to 348 (KRLMRDAGLP…PPALMDALIA (210 aa)). 168–223 (EALESRTLFVKPANMGSSVGVSRVADAGQFDQALAHAFAYDEKILIERAVPRAREI) contacts ATP. Mg(2+)-binding residues include aspartate 300, glutamate 315, and asparagine 317.

This sequence belongs to the D-alanine--D-alanine ligase family. Mg(2+) is required as a cofactor. Mn(2+) serves as cofactor.

The protein localises to the cytoplasm. It carries out the reaction 2 D-alanine + ATP = D-alanyl-D-alanine + ADP + phosphate + H(+). It participates in cell wall biogenesis; peptidoglycan biosynthesis. Its function is as follows. Cell wall formation. The chain is D-alanine--D-alanine ligase from Methylobacterium sp. (strain 4-46).